A 763-amino-acid chain; its full sequence is MSELLSFALFLASVLIYAWKAGRNTWWFAATLTVLGLFVVLNITLFASDYFTGDGINDAVLYTLTNSLTGAGVSKYILPGIGIVLGLAAVFGALGWILRRRRHHPHHFGYSLLALLLALGSVDASPAFRQITELVKSQSRDGDPDFTAYYKEPSKTIPDPKLNLVYIYGESLERTYFDNEVFPDLTPELGALKNEGLDFSHTQQLPGTDYTIAGMVASQCGIPLFAPFEGNASASVSSFFPQNICLGDILKNSGYQNYFVQGANLRFAGKDVFLKSHGFDHLYGSEELKSVVADPHYRNDWGFYDDTVLDEAWKKFEELSRSGQRFSLFTLTVDTHHPDGFISRTCNRKKYDFDGKPNQSFSAVSCSQENIATFINKIKASPWFKDTVIVVSSDHLAMNNTAWKYLNKQDRNNLFFVIRGDKPQQETLAVKRNTMDNGATVLDILGGDNYLGLGRSSLSGQSMSEIFLNIKEKTLAWKPDIIRLWKFPKEMKEFTIDQQKNMIAFSGSHFRLPLLLRVSDKRVEPLPESEYSAPLRFQLADFAPRDNFVWVDRCYKMAQLWAPELALSTDWCVSQGQLGGQQIVQHVDKAIWKGKTAFKDTVIDMARYKGNVDTLKIVDNDIRYKADSFIFNVAGAPEEVKQFSGISRPESWGRWSNAQLGDEVKIEYKHPLPKKFDLVITAKAYGNNASRPIPVRVGNEEQALVLGNEVTTTTLHFDNPTDADTLVIVPPEPVSTNEGNILGHSPRKLGIGMVEIKVVEREG.

Transmembrane regions (helical) follow at residues 1 to 21 (MSEL…AWKA), 26 to 46 (WWFA…ITLF), 77 to 97 (ILPG…LGWI), and 108 to 128 (FGYS…SPAF).

Belongs to the OpgB family.

It is found in the cell inner membrane. The enzyme catalyses a phosphatidylglycerol + a membrane-derived-oligosaccharide D-glucose = a 1,2-diacyl-sn-glycerol + a membrane-derived-oligosaccharide 6-(glycerophospho)-D-glucose.. The protein operates within glycan metabolism; osmoregulated periplasmic glucan (OPG) biosynthesis. Functionally, transfers a phosphoglycerol residue from phosphatidylglycerol to the membrane-bound nascent glucan backbones. This Escherichia coli O6:K15:H31 (strain 536 / UPEC) protein is Phosphoglycerol transferase I.